The chain runs to 413 residues: PCI domain-containing protein 2 homolog (413 aa).

Positions 222-403 (VAYNYFLGRK…QKLVISKMNA (182 aa)) constitute a PCI domain.

This sequence belongs to the CSN12 family.

The polypeptide is PCI domain-containing protein 2 homolog (Caenorhabditis elegans).